The sequence spans 99 residues: UPF0122 protein UUR10_0158 (99 aa).

Belongs to the UPF0122 family.

Its function is as follows. Might take part in the signal recognition particle (SRP) pathway. This is inferred from the conservation of its genetic proximity to ftsY/ffh. May be a regulatory protein. The sequence is that of UPF0122 protein UUR10_0158 from Ureaplasma urealyticum serovar 10 (strain ATCC 33699 / Western).